A 502-amino-acid chain; its full sequence is Type-2 serine--tRNA ligase (502 aa).

Ala304 contributes to the L-serine binding site. Residue Cys306 coordinates Zn(2+). Residue Arg336 coordinates L-serine. ATP contacts are provided by residues 336–338 (RYE) and 347–348 (RV). Residues 353 to 355 (RVE) and Gln400 contribute to the L-serine site. Glu355 lines the Zn(2+) pocket. Glu432 contacts ATP. Asn435 contributes to the L-serine binding site. Cys461 serves as a coordination point for Zn(2+). Arg468 is a binding site for ATP.

Belongs to the class-II aminoacyl-tRNA synthetase family. Type-2 seryl-tRNA synthetase subfamily. As to quaternary structure, homodimer. Zn(2+) is required as a cofactor.

The protein resides in the cytoplasm. It carries out the reaction tRNA(Ser) + L-serine + ATP = L-seryl-tRNA(Ser) + AMP + diphosphate + H(+). The enzyme catalyses tRNA(Sec) + L-serine + ATP = L-seryl-tRNA(Sec) + AMP + diphosphate + H(+). It functions in the pathway aminoacyl-tRNA biosynthesis; selenocysteinyl-tRNA(Sec) biosynthesis; L-seryl-tRNA(Sec) from L-serine and tRNA(Sec): step 1/1. In terms of biological role, catalyzes the attachment of serine to tRNA(Ser). Is also able to aminoacylate tRNA(Sec) with serine, to form the misacylated tRNA L-seryl-tRNA(Sec), which will be further converted into selenocysteinyl-tRNA(Sec). This chain is Type-2 serine--tRNA ligase, found in Methanococcoides burtonii (strain DSM 6242 / NBRC 107633 / OCM 468 / ACE-M).